The following is a 158-amino-acid chain: NAD(P)H-quinone oxidoreductase subunit J, chloroplastic (158 aa).

This sequence belongs to the complex I 30 kDa subunit family. In terms of assembly, NDH is composed of at least 16 different subunits, 5 of which are encoded in the nucleus.

The protein localises to the plastid. It is found in the chloroplast thylakoid membrane. The catalysed reaction is a plastoquinone + NADH + (n+1) H(+)(in) = a plastoquinol + NAD(+) + n H(+)(out). The enzyme catalyses a plastoquinone + NADPH + (n+1) H(+)(in) = a plastoquinol + NADP(+) + n H(+)(out). In terms of biological role, NDH shuttles electrons from NAD(P)H:plastoquinone, via FMN and iron-sulfur (Fe-S) centers, to quinones in the photosynthetic chain and possibly in a chloroplast respiratory chain. The immediate electron acceptor for the enzyme in this species is believed to be plastoquinone. Couples the redox reaction to proton translocation, and thus conserves the redox energy in a proton gradient. This chain is NAD(P)H-quinone oxidoreductase subunit J, chloroplastic, found in Liriodendron tulipifera (Tuliptree).